The primary structure comprises 216 residues: Ribosomal RNA large subunit methyltransferase E (216 aa).

Residues Gly67, Trp69, Asp87, Asp103, and Asp128 each contribute to the S-adenosyl-L-methionine site. The active-site Proton acceptor is the Lys168.

It belongs to the class I-like SAM-binding methyltransferase superfamily. RNA methyltransferase RlmE family.

Its subcellular location is the cytoplasm. The catalysed reaction is uridine(2552) in 23S rRNA + S-adenosyl-L-methionine = 2'-O-methyluridine(2552) in 23S rRNA + S-adenosyl-L-homocysteine + H(+). Its function is as follows. Specifically methylates the uridine in position 2552 of 23S rRNA at the 2'-O position of the ribose in the fully assembled 50S ribosomal subunit. In Acinetobacter baylyi (strain ATCC 33305 / BD413 / ADP1), this protein is Ribosomal RNA large subunit methyltransferase E.